The chain runs to 269 residues: Formamidopyrimidine-DNA glycosylase (269 aa).

Residue proline 2 is the Schiff-base intermediate with DNA of the active site. The active-site Proton donor is glutamate 3. Lysine 57 (proton donor; for beta-elimination activity) is an active-site residue. The DNA site is built by histidine 90, arginine 109, and lysine 150. The FPG-type zinc finger occupies 235–269; it reads QVYGRKGEPCRICGMPVVGTKHAQRATFYCRQCQK. Catalysis depends on arginine 259, which acts as the Proton donor; for delta-elimination activity.

This sequence belongs to the FPG family. As to quaternary structure, monomer. Zn(2+) serves as cofactor.

The catalysed reaction is Hydrolysis of DNA containing ring-opened 7-methylguanine residues, releasing 2,6-diamino-4-hydroxy-5-(N-methyl)formamidopyrimidine.. The enzyme catalyses 2'-deoxyribonucleotide-(2'-deoxyribose 5'-phosphate)-2'-deoxyribonucleotide-DNA = a 3'-end 2'-deoxyribonucleotide-(2,3-dehydro-2,3-deoxyribose 5'-phosphate)-DNA + a 5'-end 5'-phospho-2'-deoxyribonucleoside-DNA + H(+). Its function is as follows. Involved in base excision repair of DNA damaged by oxidation or by mutagenic agents. Acts as a DNA glycosylase that recognizes and removes damaged bases. Has a preference for oxidized purines, such as 7,8-dihydro-8-oxoguanine (8-oxoG). Has AP (apurinic/apyrimidinic) lyase activity and introduces nicks in the DNA strand. Cleaves the DNA backbone by beta-delta elimination to generate a single-strand break at the site of the removed base with both 3'- and 5'-phosphates. This Klebsiella pneumoniae subsp. pneumoniae (strain ATCC 700721 / MGH 78578) protein is Formamidopyrimidine-DNA glycosylase.